We begin with the raw amino-acid sequence, 393 residues long: NADH-quinone oxidoreductase subunit D (393 aa).

The protein belongs to the complex I 49 kDa subunit family. NDH-1 is composed of 14 different subunits. Subunits NuoB, C, D, E, F, and G constitute the peripheral sector of the complex.

The protein localises to the cell inner membrane. It carries out the reaction a quinone + NADH + 5 H(+)(in) = a quinol + NAD(+) + 4 H(+)(out). In terms of biological role, NDH-1 shuttles electrons from NADH, via FMN and iron-sulfur (Fe-S) centers, to quinones in the respiratory chain. The immediate electron acceptor for the enzyme in this species is believed to be ubiquinone. Couples the redox reaction to proton translocation (for every two electrons transferred, four hydrogen ions are translocated across the cytoplasmic membrane), and thus conserves the redox energy in a proton gradient. In Ehrlichia canis (strain Jake), this protein is NADH-quinone oxidoreductase subunit D.